Here is a 634-residue protein sequence, read N- to C-terminus: RING finger protein 207 (634 aa).

The RING-type zinc-finger motif lies at 25–63; it reads CHLCQEQYEHPCLLDCYHTFCASCLRGRVADSRLTCPVC. The B box-type; atypical zinc finger occupies 93–145; the sequence is EETVQCANCDLECKKQDVDAMYYCNTCCQPLCRDCRETTHKAKMFSRHEIVSL. Zn(2+) is bound by residues Cys-98, Cys-101, Cys-127, and His-132. The tract at residues 575-634 is disordered; that stretch reads YEDSTSTADTQPSNELSCNTEDNWTLNSLSEETNPKNKDYYRTNKQKNTTDSTNRKEIPM. Polar residues predominate over residues 577–606; that stretch reads DSTSTADTQPSNELSCNTEDNWTLNSLSEE. The segment covering 607–616 has biased composition (basic and acidic residues); the sequence is TNPKNKDYYR.

It is found in the cytoplasm. In terms of biological role, plays a role in cardiac repolarization possibly by stabilizing membrane expression of the potassium channel kcnh6a/zerg, or by assisting its synthesis, folding or export from the endoplasmic reticulum, in a heat shock protein-dependent manner. The polypeptide is RING finger protein 207 (rnf207b) (Danio rerio (Zebrafish)).